The chain runs to 232 residues: Ribonuclease 3 (232 aa).

The RNase III domain maps to 6–133; sequence LKEIEENLGV…IIAAVYLDKG (128 aa). Glu46 provides a ligand contact to Mg(2+). Residue Asp50 is part of the active site. Positions 119 and 122 each coordinate Mg(2+). Glu122 is a catalytic residue. One can recognise a DRBM domain in the interval 160–229; that stretch reads DFKTKLQELL…AKQALDILEG (70 aa).

It belongs to the ribonuclease III family. As to quaternary structure, homodimer. Mg(2+) serves as cofactor.

The protein localises to the cytoplasm. The catalysed reaction is Endonucleolytic cleavage to 5'-phosphomonoester.. Digests double-stranded RNA. Involved in the processing of primary rRNA transcript to yield the immediate precursors to the large and small rRNAs (23S and 16S). Processes some mRNAs, and tRNAs when they are encoded in the rRNA operon. Processes pre-crRNA and tracrRNA of type II CRISPR loci if present in the organism. This is Ribonuclease 3 from Clostridium beijerinckii (strain ATCC 51743 / NCIMB 8052) (Clostridium acetobutylicum).